The following is a 458-amino-acid chain: Glycine--tRNA ligase (458 aa).

Positions 97 and 171 each coordinate substrate. Residues 203–205 (RNE), 213–218 (FRTREF), 287–288 (EL), and 331–334 (GADR) each bind ATP. 218–222 (FEQME) contributes to the substrate binding site. 327-331 (EPSLG) contacts substrate.

The protein belongs to the class-II aminoacyl-tRNA synthetase family. In terms of assembly, homodimer.

It is found in the cytoplasm. It carries out the reaction tRNA(Gly) + glycine + ATP = glycyl-tRNA(Gly) + AMP + diphosphate. In terms of biological role, catalyzes the attachment of glycine to tRNA(Gly). The chain is Glycine--tRNA ligase from Bacillus anthracis.